A 786-amino-acid polypeptide reads, in one-letter code: UPF0313 protein SO_0311 (786 aa).

Residues 371–649 (AYDMIKTSIN…KALLRYHDPA (279 aa)) form the Radical SAM core domain. The [4Fe-4S] cluster site is built by Cys-385, Cys-389, and Cys-392. Disordered stretches follow at residues 669-688 (NSPNHLVPPEGRNERGPKWM) and 698-786 (LTRF…QQAK). 2 stretches are compositionally biased toward basic and acidic residues: residues 679-688 (GRNERGPKWM) and 706-717 (FDERKGKGDAKG). Low complexity predominate over residues 718 to 731 (KPSASKPKGPKSGA). Residues 732–741 (NAPQSQQPKT) are compositionally biased toward polar residues.

It belongs to the UPF0313 family. It depends on [4Fe-4S] cluster as a cofactor.

This is UPF0313 protein SO_0311 from Shewanella oneidensis (strain ATCC 700550 / JCM 31522 / CIP 106686 / LMG 19005 / NCIMB 14063 / MR-1).